The chain runs to 68 residues: DNA-directed RNA polymerase subunit Rpo10 (68 aa).

Zn(2+)-binding residues include Cys7, Cys10, Cys44, and Cys45.

It belongs to the archaeal Rpo10/eukaryotic RPB10 RNA polymerase subunit family. Part of the RNA polymerase complex. The cofactor is Zn(2+).

It localises to the cytoplasm. The catalysed reaction is RNA(n) + a ribonucleoside 5'-triphosphate = RNA(n+1) + diphosphate. DNA-dependent RNA polymerase (RNAP) catalyzes the transcription of DNA into RNA using the four ribonucleoside triphosphates as substrates. The polypeptide is DNA-directed RNA polymerase subunit Rpo10 (Methanococcus maripaludis (strain C6 / ATCC BAA-1332)).